We begin with the raw amino-acid sequence, 150 residues long: Cytochrome c oxidase subunit 5A, mitochondrial (150 aa).

Residues 1 to 41 (MLGTALRRCAVAAASRAGPRGLQHPAPVPGPTAAIQSIRCY) constitute a mitochondrion transit peptide. Residues 2–17 (LGTALRRCAVAAASRA) carry the SIFI-degron motif. Lys-87 and Lys-113 each carry N6-acetyllysine. Thr-141 is modified (phosphothreonine).

Belongs to the cytochrome c oxidase subunit 5A family. Component of the cytochrome c oxidase (complex IV, CIV), a multisubunit enzyme composed of 14 subunits. The complex is composed of a catalytic core of 3 subunits MT-CO1, MT-CO2 and MT-CO3, encoded in the mitochondrial DNA, and 11 supernumerary subunits COX4I, COX5A, COX5B, COX6A, COX6B, COX6C, COX7A, COX7B, COX7C, COX8 and NDUFA4, which are encoded in the nuclear genome. The complex exists as a monomer or a dimer and forms supercomplexes (SCs) in the inner mitochondrial membrane with NADH-ubiquinone oxidoreductase (complex I, CI) and ubiquinol-cytochrome c oxidoreductase (cytochrome b-c1 complex, complex III, CIII), resulting in different assemblies (supercomplex SCI(1)III(2)IV(1) and megacomplex MCI(2)III(2)IV(2)). Interacts with AFG1L. Interacts with RAB5IF. Post-translationally, in response to mitochondrial stress, the precursor protein is ubiquitinated by the SIFI complex in the cytoplasm before mitochondrial import, leading to its degradation. Within the SIFI complex, UBR4 initiates ubiquitin chain that are further elongated or branched by KCMF1.

The protein resides in the mitochondrion inner membrane. The protein operates within energy metabolism; oxidative phosphorylation. In terms of biological role, component of the cytochrome c oxidase, the last enzyme in the mitochondrial electron transport chain which drives oxidative phosphorylation. The respiratory chain contains 3 multisubunit complexes succinate dehydrogenase (complex II, CII), ubiquinol-cytochrome c oxidoreductase (cytochrome b-c1 complex, complex III, CIII) and cytochrome c oxidase (complex IV, CIV), that cooperate to transfer electrons derived from NADH and succinate to molecular oxygen, creating an electrochemical gradient over the inner membrane that drives transmembrane transport and the ATP synthase. Cytochrome c oxidase is the component of the respiratory chain that catalyzes the reduction of oxygen to water. Electrons originating from reduced cytochrome c in the intermembrane space (IMS) are transferred via the dinuclear copper A center (CU(A)) of subunit 2 and heme A of subunit 1 to the active site in subunit 1, a binuclear center (BNC) formed by heme A3 and copper B (CU(B)). The BNC reduces molecular oxygen to 2 water molecules using 4 electrons from cytochrome c in the IMS and 4 protons from the mitochondrial matrix. In Nycticebus coucang (Slow loris), this protein is Cytochrome c oxidase subunit 5A, mitochondrial (COX5A).